Here is a 516-residue protein sequence, read N- to C-terminus: Signal recognition particle protein (516 aa).

GTP-binding positions include 108 to 115, 191 to 195, and 249 to 252; these read GLQGAGKT, DTAGR, and TKID. A disordered region spans residues 383 to 405; sequence MTPEERENPDLLTPSRRRRIASG.

It belongs to the GTP-binding SRP family. SRP54 subfamily. As to quaternary structure, part of the signal recognition particle protein translocation system, which is composed of SRP and FtsY.

The protein localises to the cytoplasm. The enzyme catalyses GTP + H2O = GDP + phosphate + H(+). Its function is as follows. Involved in targeting and insertion of nascent membrane proteins into the cytoplasmic membrane. Binds to the hydrophobic signal sequence of the ribosome-nascent chain (RNC) as it emerges from the ribosomes. The SRP-RNC complex is then targeted to the cytoplasmic membrane where it interacts with the SRP receptor FtsY. The protein is Signal recognition particle protein of Streptococcus mutans serotype c (strain ATCC 700610 / UA159).